A 213-amino-acid polypeptide reads, in one-letter code: Na(+)-translocating NADH-quinone reductase subunit D (213 aa).

6 consecutive transmembrane segments (helical) span residues 22-42 (LIAI…TTAL), 43-63 (TMGF…SLLR), 77-97 (IIIS…FFTI), 101-121 (LSVF…AESM), 131-151 (FLDG…ISII), and 183-203 (LGLM…IWIV).

It belongs to the NqrDE/RnfAE family. Composed of six subunits; NqrA, NqrB, NqrC, NqrD, NqrE and NqrF.

It localises to the cell inner membrane. It carries out the reaction a ubiquinone + n Na(+)(in) + NADH + H(+) = a ubiquinol + n Na(+)(out) + NAD(+). NQR complex catalyzes the reduction of ubiquinone-1 to ubiquinol by two successive reactions, coupled with the transport of Na(+) ions from the cytoplasm to the periplasm. NqrA to NqrE are probably involved in the second step, the conversion of ubisemiquinone to ubiquinol. In Chlamydia trachomatis serovar L2 (strain ATCC VR-902B / DSM 19102 / 434/Bu), this protein is Na(+)-translocating NADH-quinone reductase subunit D.